Consider the following 477-residue polypeptide: Glycogen synthase (477 aa).

Lys-15 lines the ADP-alpha-D-glucose pocket.

The protein belongs to the glycosyltransferase 1 family. Bacterial/plant glycogen synthase subfamily.

The catalysed reaction is [(1-&gt;4)-alpha-D-glucosyl](n) + ADP-alpha-D-glucose = [(1-&gt;4)-alpha-D-glucosyl](n+1) + ADP + H(+). Its pathway is glycan biosynthesis; glycogen biosynthesis. Its function is as follows. Synthesizes alpha-1,4-glucan chains using ADP-glucose. The protein is Glycogen synthase of Klebsiella pneumoniae (strain 342).